Consider the following 158-residue polypeptide: Transcription elongation factor GreA (158 aa).

A coiled-coil region spans residues 10-76; the sequence is TLEGKKKLEE…QIEKMIRNAE (67 aa).

It belongs to the GreA/GreB family.

In terms of biological role, necessary for efficient RNA polymerase transcription elongation past template-encoded arresting sites. The arresting sites in DNA have the property of trapping a certain fraction of elongating RNA polymerases that pass through, resulting in locked ternary complexes. Cleavage of the nascent transcript by cleavage factors such as GreA or GreB allows the resumption of elongation from the new 3'terminus. GreA releases sequences of 2 to 3 nucleotides. This Halalkalibacterium halodurans (strain ATCC BAA-125 / DSM 18197 / FERM 7344 / JCM 9153 / C-125) (Bacillus halodurans) protein is Transcription elongation factor GreA.